We begin with the raw amino-acid sequence, 558 residues long: Potassium-transporting ATPase potassium-binding subunit (558 aa).

12 consecutive transmembrane segments (helical) span residues 1 to 21, 66 to 86, 127 to 147, 166 to 186, 245 to 265, 281 to 301, 327 to 347, 354 to 374, 377 to 397, 416 to 436, 482 to 502, and 531 to 551; these read MEII…SGYL, FNGF…WLFL, MIVM…VCIA, IVRF…ILLM, IWSN…MLFL, ALIL…LTMW, FGAG…TGSV, LTPI…VFGG, VGLM…SLMV, IVLV…LAFM, ISTG…QLMI, and IVFI…LGPI.

The protein belongs to the KdpA family. As to quaternary structure, the system is composed of three essential subunits: KdpA, KdpB and KdpC.

The protein localises to the cell membrane. Part of the high-affinity ATP-driven potassium transport (or Kdp) system, which catalyzes the hydrolysis of ATP coupled with the electrogenic transport of potassium into the cytoplasm. This subunit binds the extracellular potassium ions and delivers the ions to the membrane domain of KdpB through an intramembrane tunnel. This is Potassium-transporting ATPase potassium-binding subunit from Staphylococcus aureus (strain USA300).